A 460-amino-acid polypeptide reads, in one-letter code: Dynactin subunit 4 (460 aa).

Ala-2 is modified (N-acetylalanine). Positions 152-172 form a coiled coil; the sequence is QQLAQKEKVERDRKKLARRRN. At Ser-196 the chain carries Phosphoserine. Lys-215 is covalently cross-linked (Glycyl lysine isopeptide (Lys-Gly) (interchain with G-Cter in SUMO2)). A Phosphothreonine modification is found at Thr-407.

The protein belongs to the dynactin subunit 4 family. In terms of assembly, subunit of dynactin, a multiprotein complex part of a tripartite complex with dynein and a adapter, such as BICDL1, BICD2 or HOOK3. The dynactin complex is built around ACTR1A/ACTB filament and consists of an actin-related filament composed of a shoulder domain, a pointed end and a barbed end. Its length is defined by its flexible shoulder domain. The soulder is composed of 2 DCTN1 subunits, 4 DCTN2 and 2 DCTN3. The 4 DCNT2 (via N-terminus) bind the ACTR1A filament and act as molecular rulers to determine the length. The pointed end is important for binding dynein-dynactin cargo adapters. Consists of 4 subunits: ACTR10, DCNT4, DCTN5 and DCTN6. The barbed end is composed of a CAPZA1:CAPZB heterodimers, which binds ACTR1A/ACTB filament and dynactin and stabilizes dynactin. Interacts with ATP7B, but not ATP7A, in a copper-dependent manner. Interacts with ANK2; this interaction is required for localization at costameres. Interacts with N4BP2L1.

The protein resides in the cytoplasm. The protein localises to the cytoskeleton. It localises to the microtubule organizing center. Its subcellular location is the centrosome. It is found in the stress fiber. The protein resides in the cell cortex. The protein localises to the myofibril. It localises to the sarcomere. Part of the dynactin complex that activates the molecular motor dynein for ultra-processive transport along microtubules. This chain is Dynactin subunit 4, found in Homo sapiens (Human).